The primary structure comprises 435 residues: tRNA modification GTPase MnmE (435 aa).

Residues Arg20, Glu77, and Lys117 each coordinate (6S)-5-formyl-5,6,7,8-tetrahydrofolate. Positions 214-359 constitute a TrmE-type G domain; sequence GLKIVIAGAP…FIKKLESFCH (146 aa). GTP contacts are provided by residues 224 to 229, 243 to 249, and 268 to 271; these read NSGKSS, TEEAGTT, and DTAG. Residues Ser228 and Thr249 each contribute to the Mg(2+) site. Lys435 provides a ligand contact to (6S)-5-formyl-5,6,7,8-tetrahydrofolate.

This sequence belongs to the TRAFAC class TrmE-Era-EngA-EngB-Septin-like GTPase superfamily. TrmE GTPase family. As to quaternary structure, homodimer. Heterotetramer of two MnmE and two MnmG subunits. K(+) serves as cofactor.

The protein resides in the cytoplasm. Functionally, exhibits a very high intrinsic GTPase hydrolysis rate. Involved in the addition of a carboxymethylaminomethyl (cmnm) group at the wobble position (U34) of certain tRNAs, forming tRNA-cmnm(5)s(2)U34. The protein is tRNA modification GTPase MnmE of Bartonella tribocorum (strain CIP 105476 / IBS 506).